The following is a 253-amino-acid chain: Imidazole glycerol phosphate synthase subunit HisF (253 aa).

Catalysis depends on residues D11 and D130.

This sequence belongs to the HisA/HisF family. In terms of assembly, heterodimer of HisH and HisF.

Its subcellular location is the cytoplasm. It carries out the reaction 5-[(5-phospho-1-deoxy-D-ribulos-1-ylimino)methylamino]-1-(5-phospho-beta-D-ribosyl)imidazole-4-carboxamide + L-glutamine = D-erythro-1-(imidazol-4-yl)glycerol 3-phosphate + 5-amino-1-(5-phospho-beta-D-ribosyl)imidazole-4-carboxamide + L-glutamate + H(+). It participates in amino-acid biosynthesis; L-histidine biosynthesis; L-histidine from 5-phospho-alpha-D-ribose 1-diphosphate: step 5/9. IGPS catalyzes the conversion of PRFAR and glutamine to IGP, AICAR and glutamate. The HisF subunit catalyzes the cyclization activity that produces IGP and AICAR from PRFAR using the ammonia provided by the HisH subunit. In Ruegeria sp. (strain TM1040) (Silicibacter sp.), this protein is Imidazole glycerol phosphate synthase subunit HisF.